The sequence spans 125 residues: Translation initiation factor 5A (125 aa).

K35 carries the post-translational modification Hypusine.

The protein belongs to the eIF-5A family.

It is found in the cytoplasm. Functionally, functions by promoting the formation of the first peptide bond. The sequence is that of Translation initiation factor 5A (eIF5A) from Methanoculleus marisnigri (strain ATCC 35101 / DSM 1498 / JR1).